Here is a 395-residue protein sequence, read N- to C-terminus: Protein TAMALIN (395 aa).

Residues 1–52 (MTLRRLRKLQQKEEAAATPDPAARTPDSEVAPAAPVPTPGPPAAAATPGPPA) form a disordered region. Residues 16–33 (AATPDPAARTPDSEVAPA) show a composition bias toward low complexity. Thr-77 is modified (phosphothreonine). Phosphoserine is present on Ser-94. In terms of domain architecture, PDZ spans 101–190 (VLTLEKEDNQ…VLRLETLYGT (90 aa)). The interaction with PSCD3 stretch occupies residues 181 to 258 (VLRLETLYGT…GAGLLPGSLP (78 aa)). A Phosphotyrosine modification is found at Tyr-237. Arg-270 carries the post-translational modification Omega-N-methylarginine. Residues 293-349 (SEPPALPPPPPPARAFGPGPAETPAVGPGPGPRAALSRSASVRCAGPGGGGGGGAPG) are disordered. The segment covering 296–305 (PALPPPPPPA) has biased composition (pro residues). Residues 338–348 (GPGGGGGGGAP) are compositionally biased toward gly residues. Ser-387 is modified (phosphoserine).

As to quaternary structure, heteromer. Composed of TAMALIN, CYTH2 and at least one GRM1. Also interacts with CYTH3, GRM2, GRM3 and GRM5.

The protein localises to the cytoplasm. The protein resides in the perinuclear region. It is found in the cell membrane. Its subcellular location is the postsynaptic cell membrane. Functionally, plays a role in intracellular trafficking and contributes to the macromolecular organization of group 1 metabotropic glutamate receptors (mGluRs) at synapses. This chain is Protein TAMALIN, found in Homo sapiens (Human).